The chain runs to 251 residues: CDP-diacylglycerol pyrophosphatase (251 aa).

Residues 4-24 traverse the membrane as a helical segment; that stretch reads AGLLFLVMIVIAVVAAGIGYW.

It belongs to the Cdh family.

It is found in the cell inner membrane. It carries out the reaction a CDP-1,2-diacyl-sn-glycerol + H2O = a 1,2-diacyl-sn-glycero-3-phosphate + CMP + 2 H(+). Its pathway is phospholipid metabolism; CDP-diacylglycerol degradation; phosphatidate from CDP-diacylglycerol: step 1/1. The polypeptide is CDP-diacylglycerol pyrophosphatase (Escherichia coli O9:H4 (strain HS)).